A 427-amino-acid chain; its full sequence is 3-phosphoshikimate 1-carboxyvinyltransferase (427 aa).

3-phosphoshikimate is bound by residues Lys-22, Ser-23, and Arg-27. Lys-22 contacts phosphoenolpyruvate. Gly-93 and Arg-122 together coordinate phosphoenolpyruvate. 3-phosphoshikimate is bound by residues Ser-167, Gln-169, Asp-315, and Lys-342. Residue Gln-169 coordinates phosphoenolpyruvate. Catalysis depends on Asp-315, which acts as the Proton acceptor. Residues Arg-346 and Arg-387 each contribute to the phosphoenolpyruvate site.

This sequence belongs to the EPSP synthase family. Monomer.

The protein localises to the cytoplasm. It carries out the reaction 3-phosphoshikimate + phosphoenolpyruvate = 5-O-(1-carboxyvinyl)-3-phosphoshikimate + phosphate. It participates in metabolic intermediate biosynthesis; chorismate biosynthesis; chorismate from D-erythrose 4-phosphate and phosphoenolpyruvate: step 6/7. Functionally, catalyzes the transfer of the enolpyruvyl moiety of phosphoenolpyruvate (PEP) to the 5-hydroxyl of shikimate-3-phosphate (S3P) to produce enolpyruvyl shikimate-3-phosphate and inorganic phosphate. The protein is 3-phosphoshikimate 1-carboxyvinyltransferase of Thermus thermophilus (strain ATCC BAA-163 / DSM 7039 / HB27).